Reading from the N-terminus, the 405-residue chain is 4-hydroxy-3-methylbut-2-en-1-yl diphosphate synthase (flavodoxin) (405 aa).

[4Fe-4S] cluster is bound by residues Cys297, Cys300, Cys343, and Glu350.

It belongs to the IspG family. [4Fe-4S] cluster serves as cofactor.

The catalysed reaction is (2E)-4-hydroxy-3-methylbut-2-enyl diphosphate + oxidized [flavodoxin] + H2O + 2 H(+) = 2-C-methyl-D-erythritol 2,4-cyclic diphosphate + reduced [flavodoxin]. The protein operates within isoprenoid biosynthesis; isopentenyl diphosphate biosynthesis via DXP pathway; isopentenyl diphosphate from 1-deoxy-D-xylulose 5-phosphate: step 5/6. Functionally, converts 2C-methyl-D-erythritol 2,4-cyclodiphosphate (ME-2,4cPP) into 1-hydroxy-2-methyl-2-(E)-butenyl 4-diphosphate. In Francisella tularensis subsp. novicida (strain U112), this protein is 4-hydroxy-3-methylbut-2-en-1-yl diphosphate synthase (flavodoxin).